The chain runs to 227 residues: Albumin-2 (227 aa).

Hemopexin repeat units lie at residues 3 to 46 (PGYI…GPTP), 61 to 111 (SYGI…FPFF), 117 to 165 (ESGI…YPCF), and 171 to 221 (ESGA…WPSL). Residues Asn7 and Asp65 each coordinate Ca(2+). Ser118 is a spermine binding site. 2 residues coordinate Ca(2+): Asp121 and Asp175.

In terms of assembly, monomer and homodimer. Dimers are prevalent in solution.

It localises to the cytoplasm. The protein resides in the cytosol. Its function is as follows. May play a role in response to oxidative stress and polyamine biosynthesis. The monomeric form binds one hemin per monomer. In the dimeric form, about half of the dimers bind one molecule of spermine each under physiological conditions. Ligand binding is mutually exclusive as binding of hemin leads to dissociation of the dimer. This chain is Albumin-2, found in Lathyrus sativus (White vetchling).